The primary structure comprises 341 residues: Phosphoribosylformylglycinamidine cyclo-ligase (341 aa).

Belongs to the AIR synthase family.

Its subcellular location is the cytoplasm. The catalysed reaction is 2-formamido-N(1)-(5-O-phospho-beta-D-ribosyl)acetamidine + ATP = 5-amino-1-(5-phospho-beta-D-ribosyl)imidazole + ADP + phosphate + H(+). It participates in purine metabolism; IMP biosynthesis via de novo pathway; 5-amino-1-(5-phospho-D-ribosyl)imidazole from N(2)-formyl-N(1)-(5-phospho-D-ribosyl)glycinamide: step 2/2. The protein is Phosphoribosylformylglycinamidine cyclo-ligase of Lachnospira eligens (strain ATCC 27750 / DSM 3376 / VPI C15-48 / C15-B4) (Eubacterium eligens).